A 321-amino-acid polypeptide reads, in one-letter code: Replication factor C small subunit (321 aa).

An ATP-binding site is contributed by 43–50 (GFAGVGKT).

The protein belongs to the activator 1 small subunits family. RfcS subfamily. Heteromultimer composed of small subunits (RfcS) and large subunits (RfcL).

Its function is as follows. Part of the RFC clamp loader complex which loads the PCNA sliding clamp onto DNA. The chain is Replication factor C small subunit from Methanosphaera stadtmanae (strain ATCC 43021 / DSM 3091 / JCM 11832 / MCB-3).